Reading from the N-terminus, the 184-residue chain is Translocon-associated protein subunit beta (184 aa).

Residues 1-20 form the signal peptide; sequence MNFKTVISLFLVLFVSFVYC. The Lumenal segment spans residues 21-147; the sequence is ENGAELLFHK…SQADYEKRTS (127 aa). N-linked (GlcNAc...) asparagine glycosylation is present at Asn94. A helical membrane pass occupies residues 148-168; the sequence is LLIKEWITFFVLCAGAIALPY. Over 169–184 the chain is Cytoplasmic; that stretch reads SISTYYKKNYENGIKK.

This sequence belongs to the TRAP-beta family. In terms of assembly, heterotrimer of TRAP-alpha, TRAP-beta and TRAP-gamma.

Its subcellular location is the endoplasmic reticulum membrane. Functionally, TRAP proteins are part of a complex whose function is to bind calcium to the ER membrane and thereby regulate the retention of ER resident proteins. The polypeptide is Translocon-associated protein subunit beta (ssr2) (Dictyostelium discoideum (Social amoeba)).